Reading from the N-terminus, the 1318-residue chain is Uromodulin-like 1 (1318 aa).

The first 21 residues, 1 to 21 (MLRTSGLALLALVSAVGPSQA), serve as a signal peptide directing secretion. The Extracellular segment spans residues 22–1272 (SGFTEKGLSL…HAEAGLGAGY (1251 aa)). Residues 33-106 (GYQLCSHRVT…YEQLGLYCVL (74 aa)) enclose the EMI domain. Intrachain disulfides connect C37–C94, C61–C70, and C93–C104. An N-linked (GlcNAc...) asparagine glycan is attached at N89. The N-linked (GlcNAc...) asparagine glycan is linked to N109. The WAP domain occupies 114-158 (FTSRPGACPAEGPEPSTSPCSLDIDCPGLEKCCPWSGGRYCMAPA). The N-linked (GlcNAc...) asparagine glycan is linked to N172. The region spanning 264 to 313 (DVNECFYEELNACSGRELCANLEGSYWCVCHQEAPATSPRKLNLEWEDCP) is the EGF-like 1; calcium-binding domain. Positions 314–398 (PVSDYVVLNV…TTLTIKTNAQ (85 aa)) constitute a Fibronectin type-III 1 domain. N-linked (GlcNAc...) asparagine glycans are attached at residues N322, N335, and N417. Residues 396–510 (NAQVFEVTIK…QGTRVQDWDE (115 aa)) form the SEA 1 domain. Residues 507-552 (DWDECVDSAEHDCSPAAWCINLEGSYTCQCRTTRDATPSRAGRACE) form the EGF-like 2; calcium-binding domain. 3 disulfide bridges follow: C511–C525, C519–C534, and C536–C551. The N-linked (GlcNAc...) asparagine glycan is linked to N585. The segment at 593 to 655 (GYPQGTPAAG…PSPTEDPTGH (63 aa)) is disordered. The 90-residue stretch at 702 to 791 (VPVSIGRIMV…HLKVRTAARK (90 aa)) folds into the Fibronectin type-III 2 domain. N713 carries an N-linked (GlcNAc...) asparagine glycan. An SEA 2 domain is found at 788 to 900 (AARKLIGKVR…GDTFIQDYDE (113 aa)). The EGF-like 3; calcium-binding domain maps to 897–938 (DYDECERKEDDCVPGTSCRNTLGSFTCSCEGGAPDFPVEYSE). Disulfide bonds link C901-C914 and C908-C923. A disordered region spans residues 938-957 (ERPCEGDSPGNETWATSPER). N-linked (GlcNAc...) asparagine glycans are attached at residues N984 and N1050. In terms of domain architecture, ZP spans 992-1235 (LCEIEKVVVA…ATCKINCNNF (244 aa)). A disulfide bond links C1157 and C1215. A helical transmembrane segment spans residues 1273–1293 (VVLIVVAIFVLVAGTATLLIV). Residues 1294–1318 (RYQRMNGRYNFKIQSNNFSYQVFYE) are Cytoplasmic-facing.

Isoform 4 is expressed at low level in kidney, testis and fetal thymus. Isoform 3 is expressed at low level in prostate, testis and fetal thymus.

It is found in the cell membrane. The protein localises to the cytoplasm. This chain is Uromodulin-like 1 (UMODL1), found in Homo sapiens (Human).